A 353-amino-acid polypeptide reads, in one-letter code: MDGFRIYPSDNYTEDDLGSGDYDSMKEPCFREENAHFNRIFLPTVYSIIFLTGIVGNGLVILVMGYQKKLRSMTDKYRLHLSVADLLFVLTLPFWAVDAVANWYFGKFLCKAVHVIYTVNLYSSVLILAFISLDRYLAIVHATNSQRPRKLLAEKVVYVGVWIPALLLTIPDFIFANVREADGRYICDRFYPSDSWLVVFQFQHIMVGLILPGIVILSCYCIIISKLSHSKGYQKRKALKTTVILILAFFACWLPYYIGISIDSFILLEIIKQGCEFESTVHKWISITEALAFFHCCLNPILYAFLGAKFKTSAQHALTSVSRGSSLKILSKGKRGGHSSVSTESESSSFHSS.

Residues 1-22 (MDGFRIYPSDNYTEDDLGSGDY) are important for chemokine binding and signaling. Residues 1–39 (MDGFRIYPSDNYTEDDLGSGDYDSMKEPCFREENAHFNR) are Extracellular-facing. Tyrosine 7 carries the post-translational modification Sulfotyrosine. An N-linked (GlcNAc...) asparagine glycan is attached at asparagine 11. Tyrosine 12 is subject to Sulfotyrosine. The O-linked (Xyl...) (chondroitin sulfate) serine glycan is linked to serine 19. The residue at position 22 (tyrosine 22) is a Sulfotyrosine. Cystine bridges form between cysteine 29–cysteine 275 and cysteine 110–cysteine 187. Residues 40-64 (IFLPTVYSIIFLTGIVGNGLVILVM) form a helical membrane-spanning segment. Residues 65–78 (GYQKKLRSMTDKYR) lie on the Cytoplasmic side of the membrane. Residues 79–100 (LHLSVADLLFVLTLPFWAVDAV) traverse the membrane as a helical segment. The tract at residues 95–98 (WAVD) is chemokine binding. Topologically, residues 101-111 (ANWYFGKFLCK) are extracellular. Residues 112–131 (AVHVIYTVNLYSSVLILAFI) form a helical membrane-spanning segment. The tract at residues 114–118 (HVIYT) is chemokine binding. Residues 132–155 (SLDRYLAIVHATNSQRPRKLLAEK) lie on the Cytoplasmic side of the membrane. The Important for signaling signature appears at 134–136 (DRY). The segment at 136-148 (YLAIVHATNSQRP) is involved in dimerization; when bound to chemokine. A helical transmembrane segment spans residues 156 to 175 (VVYVGVWIPALLLTIPDFIF). Topologically, residues 176–196 (ANVREADGRYICDRFYPSDSW) are extracellular. The chemokine binding, important for signaling stretch occupies residues 187-191 (CDRFY). Positions 192–211 (PSDSWLVVFQFQHIMVGLIL) are involved in dimerization. The helical transmembrane segment at 197 to 217 (LVVFQFQHIMVGLILPGIVIL) threads the bilayer. Residues 218–242 (SCYCIIISKLSHSKGYQKRKALKTT) are Cytoplasmic-facing. A helical membrane pass occupies residues 243–262 (VILILAFFACWLPYYIGISI). The Extracellular portion of the chain corresponds to 263–283 (DSFILLEIIKQGCEFESTVHK). The interval 267–269 (LLE) is involved in dimerization. The chain crosses the membrane as a helical span at residues 284 to 303 (WISITEALAFFHCCLNPILY). Over 304-353 (AFLGAKFKTSAQHALTSVSRGSSLKILSKGKRGGHSSVSTESESSSFHSS) the chain is Cytoplasmic. Serine 320 and serine 322 each carry phosphoserine. 2 positions are modified to phosphoserine; by PKC and GRK6: serine 325 and serine 326. Residues 330–353 (LSKGKRGGHSSVSTESESSSFHSS) form a disordered region. Serine 331 is modified (phosphoserine; by GRK6). Lysine 332 is covalently cross-linked (Glycyl lysine isopeptide (Lys-Gly) (interchain with G-Cter in ubiquitin)). Residues 338-353 (HSSVSTESESSSFHSS) show a composition bias toward low complexity. At serine 340 the chain carries Phosphoserine; by GRK6. Residues serine 349 and serine 352 each carry the phosphoserine modification.

It belongs to the G-protein coupled receptor 1 family. In terms of assembly, monomer. Can form homodimers. Interacts with CD164. Interacts with ARRB2; the interaction is dependent on the C-terminal phosphorylation of CXCR4 and allows activation of MAPK1 and MAPK3. Interacts with ARR3; the interaction is dependent on the C-terminal phosphorylation of CXCR4 and modulates calcium mobilization. Interacts with RNF113A; the interaction, enhanced by CXCL12, promotes CXCR4 ubiquitination and subsequent degradation. Interacts (via the cytoplasmic C-terminal) with ITCH (via the WW domains I and II); the interaction, enhanced by CXCL12, promotes CXCR4 ubiquitination and leads to its degradation. Interacts with extracellular ubiquitin. Interacts with DBN1; this interaction is enhanced by antigenic stimulation. Following LPS binding, may form a complex with GDF5, HSP90AA1 and HSPA8. In terms of processing, phosphorylated on agonist stimulation. Rapidly phosphorylated on serine and threonine residues in the C-terminal. Phosphorylation at Ser-325 and Ser-326 leads to recruitment of ITCH, ubiquitination and protein degradation. Ubiquitinated after ligand binding, leading to its degradation. Ubiquitinated by ITCH at the cell membrane on agonist stimulation. The ubiquitin-dependent mechanism, endosomal sorting complex required for transport (ESCRT), then targets CXCR4 for lysosomal degradation. This process is dependent also on prior Ser-/Thr-phosphorylation in the C-terminal of CXCR4. Also binding of ARRB1 to STAM negatively regulates CXCR4 sorting to lysosomes though modulating ubiquitination of SFR5S. Post-translationally, sulfation is required for efficient binding of CXCL12/SDF-1alpha and promotes its dimerization. In terms of processing, O- and N-glycosylated. N-glycosylation can mask coreceptor function. The O-glycosylation chondroitin sulfate attachment does not affect interaction with CXCL12/SDF-1alpha nor its coreceptor activity.

It localises to the cell membrane. The protein localises to the cell junction. Its subcellular location is the early endosome. The protein resides in the late endosome. It is found in the lysosome. In terms of biological role, receptor for the C-X-C chemokine CXCL12/SDF-1 that transduces a signal by increasing intracellular calcium ion levels and enhancing MAPK1/MAPK3 activation. Involved in the AKT signaling cascade. Plays a role in regulation of cell migration, e.g. during wound healing. Acts as a receptor for extracellular ubiquitin; leading to enhanced intracellular calcium ions and reduced cellular cAMP levels. Binds bacterial lipopolysaccharide (LPS) et mediates LPS-induced inflammatory response, including TNF secretion by monocytes. Involved in hematopoiesis and in cardiac ventricular septum formation. Also plays an essential role in vascularization of the gastrointestinal tract, probably by regulating vascular branching and/or remodeling processes in endothelial cells. Involved in cerebellar development. In the CNS, could mediate hippocampal-neuron survival. The chain is C-X-C chemokine receptor type 4 (CXCR4) from Felis catus (Cat).